The chain runs to 153 residues: Cofilin (153 aa).

The ADF-H domain occupies 15–147; that stretch reads GVAVNDSALQ…AYESVLERVS (133 aa).

Belongs to the actin-binding proteins ADF family.

Its subcellular location is the cytoplasm. It localises to the cytoskeleton. The protein localises to the nucleus matrix. Its function is as follows. Controls reversibly actin polymerization and depolymerization in a pH-sensitive manner. It has the ability to bind G- and F-actin in a 1:1 ratio of cofilin to actin. Binding to F-actin is regulated by tropomyosin. It is the major component of intranuclear and cytoplasmic actin rods. Required for accumulation of actin at the cell division site via depolymerizing actin at the cell ends. In association with myosin II has a role in the assembly of the contractile ring via severing actin filaments. Involved in the maintenance of the contractile ring once formed. In association with profilin and capping protein, has a role in the mitotic reorganization of the actin cytoskeleton. The sequence is that of Cofilin (COF1) from Yarrowia lipolytica (strain CLIB 122 / E 150) (Yeast).